The primary structure comprises 839 residues: Taste receptor type 1 member 2 (839 aa).

The signal sequence occupies residues 1 to 19; the sequence is MGPRAKTISSLFFLLWVLA. Residues 20-566 are Extracellular-facing; it reads EPAENSDFYL…VFLEWHEAPT (547 aa). N-linked (GlcNAc...) asparagine glycans are attached at residues asparagine 84, asparagine 248, asparagine 292, asparagine 312, asparagine 368, asparagine 428, asparagine 487, and asparagine 527. A helical transmembrane segment spans residues 567 to 587; sequence IAVALLAALGFLSTLAILVIF. Residues 588–602 lie on the Cytoplasmic side of the membrane; sequence WRHFQTPIVRSAGGP. Residues 603-623 traverse the membrane as a helical segment; sequence MCFLMLTLLLVAYMVVPVYVG. At 624 to 635 the chain is on the extracellular side; sequence PPKVSTCLCRQA. The helical transmembrane segment at 636–656 threads the bilayer; the sequence is LFPLCFTICISCIAVRSFQIV. The Cytoplasmic portion of the chain corresponds to 657–681; that stretch reads CAFKMASRFPRAYSYWVRYQGPYVS. A helical transmembrane segment spans residues 682–702; that stretch reads MAFITVLKMVIVVIGMLATGL. Residues 703-727 lie on the Extracellular side of the membrane; sequence SPTTRTDPDDPKITIVSCNPNYRNS. The helical transmembrane segment at 728–748 threads the bilayer; it reads LLFNTSLDLLLSVVGFSFAYM. At 749–760 the chain is on the cytoplasmic side; the sequence is GKELPTNYNEAK. A helical membrane pass occupies residues 761–781; it reads FITLSMTFYFTSSVSLCTFMS. Residues 782–784 lie on the Extracellular side of the membrane; sequence AYS. The chain crosses the membrane as a helical span at residues 785 to 805; it reads GVLVTIVDLLVTVLNLLAISL. Residues 806–839 lie on the Cytoplasmic side of the membrane; it reads GYFGPKCYMILFYPERNTPAYFNSMIQGYTMRRD.

It belongs to the G-protein coupled receptor 3 family. TAS1R subfamily. Forms heterodimers with TAS1R3.

It localises to the cell membrane. Putative taste receptor. TAS1R2/TAS1R3 recognizes diverse natural and synthetic sweeteners. The protein is Taste receptor type 1 member 2 (TAS1R2) of Homo sapiens (Human).